The sequence spans 489 residues: Monocarboxylate transporter 2 (489 aa).

Over 1 to 21 (MPSESSVKATAAPPPFPLPPD) the chain is Cytoplasmic. A helical membrane pass occupies residues 22–42 (GGWGWVVVCASFISIGFSYAF). Topologically, residues 43–65 (PKAVTVFFNDIKDIFKTTSSQIA) are extracellular. The helical transmembrane segment at 66-86 (WISSIMLAVMYAGGPISSVLV) threads the bilayer. Topologically, residues 87–95 (NNYGSRPVV) are cytoplasmic. Residues 96-116 (IVGGLLCCTGMILASFSSSVI) form a helical membrane-spanning segment. At 117-121 (ELYLT) the chain is on the extracellular side. A helical transmembrane segment spans residues 122–142 (VGFIGGLGLAFNLQPALTIIG). Topologically, residues 143 to 154 (KYFYRKRPLANG) are cytoplasmic. The chain crosses the membrane as a helical span at residues 155-175 (FAMAGSPVFLSTLAPFNQFLF). Topologically, residues 176–179 (NSYG) are extracellular. A helical transmembrane segment spans residues 180-200 (WKGSFLILGAIFLHSCVAGCL). Residues 201-250 (MRPVGPSPRAAKSKSKVGSRQDSSTKRLSKVSTAEKINRFLDFGLFTHRG) are Cytoplasmic-facing. The disordered stretch occupies residues 206–227 (PSPRAAKSKSKVGSRQDSSTKR). Residues 251-271 (FLIYLSGNVVLFLGMFAPIIF) traverse the membrane as a helical segment. The Extracellular segment spans residues 272-286 (LAPYAKDKGVDDYNS). The helical transmembrane segment at 287–307 (AFLLSVMAFTDMFARPSVGLI) threads the bilayer. Topologically, residues 308–316 (ANTSLIRPR) are cytoplasmic. Residues 317-337 (IQYLFSVAIMFTGICHLLCPL) traverse the membrane as a helical segment. Topologically, residues 338–342 (AHSYT) are extracellular. The chain crosses the membrane as a helical span at residues 343–363 (ALVVYVIFFGIGFGSISSLLF). At 364–377 (ECLMDQVGASRFSS) the chain is on the cytoplasmic side. A helical membrane pass occupies residues 378-398 (AVGLVTIVECCPVLFGPPLAG). The Extracellular portion of the chain corresponds to 399–410 (KLLDITGQYKYL). A helical membrane pass occupies residues 411–431 (YIASGIVVLSSGIYLLICNAI). Topologically, residues 432–489 (NYRLLEKERKREKARRKKSASQASKEMEALSRSKQDDVTVKVSNTHNPPSDRDKESSI) are cytoplasmic. Residues 441-489 (KREKARRKKSASQASKEMEALSRSKQDDVTVKVSNTHNPPSDRDKESSI) are disordered. 2 stretches are compositionally biased toward basic and acidic residues: residues 456–470 (KEME…DDVT) and 480–489 (PSDRDKESSI).

Belongs to the major facilitator superfamily. Monocarboxylate porter (TC 2.A.1.13) family. In terms of assembly, homodimer. Interacts with GRID2IP. Interacts with EMB; interaction mediates SLC16A7 targeting to the plasma membrane. Interacts with isoform 2 of BSG. Detected in brain and kidney (at protein level).

The protein localises to the cell membrane. It is found in the basolateral cell membrane. Its subcellular location is the cytoplasm. It carries out the reaction 3-methyl-2-oxobutanoate(out) + H(+)(out) = 3-methyl-2-oxobutanoate(in) + H(+)(in). The enzyme catalyses (S)-lactate(in) + H(+)(in) = (S)-lactate(out) + H(+)(out). The catalysed reaction is acetoacetate(out) + H(+)(out) = acetoacetate(in) + H(+)(in). It catalyses the reaction (R)-3-hydroxybutanoate(out) + H(+)(out) = (R)-3-hydroxybutanoate(in) + H(+)(in). It carries out the reaction 4-methyl-2-oxopentanoate(out) + H(+)(out) = 4-methyl-2-oxopentanoate(in) + H(+)(in). The enzyme catalyses pyruvate(out) + H(+)(out) = pyruvate(in) + H(+)(in). The catalysed reaction is (S)-3-hydroxybutanoate(out) + H(+)(out) = (S)-3-hydroxybutanoate(in) + H(+)(in). Its activity is regulated as follows. Transport activity exhibits steep dependence on substrate concentration. Substrate concentration sensitivity of SLC16A7 arises from the strong inter-subunit cooperativity of the SLC16A7 dimer during transport. Inhibited by AR-C155858. In terms of biological role, proton-coupled monocarboxylate symporter. Catalyzes the rapid transport across the plasma membrane of monocarboxylates such as L-lactate, pyruvate and ketone bodies, acetoacetate, beta-hydroxybutyrate and acetate. Dimerization is functionally required and both subunits work cooperatively in transporting substrate. The sequence is that of Monocarboxylate transporter 2 (Slc16a7) from Rattus norvegicus (Rat).